A 228-amino-acid polypeptide reads, in one-letter code: Phosphoglycolate phosphatase 1 (228 aa).

Asp-8 functions as the Nucleophile in the catalytic mechanism. Mg(2+)-binding residues include Asp-8 and Asp-10. Lys-149 serves as a coordination point for substrate. 2 residues coordinate Mg(2+): Asp-172 and Asp-176.

This sequence belongs to the archaeal SPP-like hydrolase family. Mg(2+) is required as a cofactor.

The enzyme catalyses 2-phosphoglycolate + H2O = glycolate + phosphate. Catalyzes the dephosphorylation of 2-phosphoglycolate. In Saccharolobus solfataricus (strain ATCC 35092 / DSM 1617 / JCM 11322 / P2) (Sulfolobus solfataricus), this protein is Phosphoglycolate phosphatase 1.